The sequence spans 249 residues: Small ribosomal subunit protein eS6 (249 aa).

Basic and acidic residues predominate over residues 216–229 (RMKEAKEKRQEQIA). The interval 216–249 (RMKEAKEKRQEQIAKRRRLSSLRASTSKSESSQK) is disordered. Ser-235, Ser-236, Ser-240, Ser-244, and Ser-247 each carry phosphoserine. Residues 236–249 (SLRASTSKSESSQK) show a composition bias toward low complexity.

It belongs to the eukaryotic ribosomal protein eS6 family. As to quaternary structure, component of the small ribosomal subunit. Part of the small subunit (SSU) processome, composed of more than 70 proteins and the RNA chaperone small nucleolar RNA (snoRNA) U3. Ribosomal protein S6 is the major substrate of protein kinases in eukaryote ribosomes. The phosphorylation is stimulated by growth factors, tumor promoting agents, and mitogens. It is dephosphorylated at growth arrest.

Its subcellular location is the cytoplasm. The protein resides in the nucleus. The protein localises to the nucleolus. Its function is as follows. Component of the 40S small ribosomal subunit. Plays an important role in controlling cell growth and proliferation through the selective translation of particular classes of mRNA. Part of the small subunit (SSU) processome, first precursor of the small eukaryotic ribosomal subunit. During the assembly of the SSU processome in the nucleolus, many ribosome biogenesis factors, an RNA chaperone and ribosomal proteins associate with the nascent pre-rRNA and work in concert to generate RNA folding, modifications, rearrangements and cleavage as well as targeted degradation of pre-ribosomal RNA by the RNA exosome. The polypeptide is Small ribosomal subunit protein eS6 (RPS6) (Gallus gallus (Chicken)).